Consider the following 255-residue polypeptide: Adenosylcobinamide-GDP ribazoletransferase (255 aa).

The next 6 membrane-spanning stretches (helical) occupy residues 43–63 (LVGTLLGLLCVLVYAFASLFF), 64–84 (PYQVAIVLMMAFSLLLTGAFH), 113–133 (IGTYGSATLTMALIGKFVFLT), 141–161 (FGLMIVVAYTLSRAVAATLIY), 195–215 (LAAISLGLGVGLLLILFAILF), and 234–254 (CLGGAQQLMELGIYLVLIAVV).

It belongs to the CobS family. Mg(2+) is required as a cofactor.

The protein resides in the cell inner membrane. The catalysed reaction is alpha-ribazole + adenosylcob(III)inamide-GDP = adenosylcob(III)alamin + GMP + H(+). It carries out the reaction alpha-ribazole 5'-phosphate + adenosylcob(III)inamide-GDP = adenosylcob(III)alamin 5'-phosphate + GMP + H(+). It functions in the pathway cofactor biosynthesis; adenosylcobalamin biosynthesis; adenosylcobalamin from cob(II)yrinate a,c-diamide: step 7/7. Functionally, joins adenosylcobinamide-GDP and alpha-ribazole to generate adenosylcobalamin (Ado-cobalamin). Also synthesizes adenosylcobalamin 5'-phosphate from adenosylcobinamide-GDP and alpha-ribazole 5'-phosphate. The chain is Adenosylcobinamide-GDP ribazoletransferase from Vibrio vulnificus (strain CMCP6).